A 116-amino-acid chain; its full sequence is UPF0342 protein LBA1592 (116 aa).

It belongs to the UPF0342 family.

In Lactobacillus acidophilus (strain ATCC 700396 / NCK56 / N2 / NCFM), this protein is UPF0342 protein LBA1592.